The chain runs to 169 residues: ATP synthase subunit b (169 aa).

Residues 12–32 traverse the membrane as a helical segment; it reads HIYLGNALWYLICFAILLLLI.

This sequence belongs to the ATPase B chain family. F-type ATPases have 2 components, F(1) - the catalytic core - and F(0) - the membrane proton channel. F(1) has five subunits: alpha(3), beta(3), gamma(1), delta(1), epsilon(1). F(0) has three main subunits: a(1), b(2) and c(10-14). The alpha and beta chains form an alternating ring which encloses part of the gamma chain. F(1) is attached to F(0) by a central stalk formed by the gamma and epsilon chains, while a peripheral stalk is formed by the delta and b chains.

The protein resides in the cell membrane. In terms of biological role, f(1)F(0) ATP synthase produces ATP from ADP in the presence of a proton or sodium gradient. F-type ATPases consist of two structural domains, F(1) containing the extramembraneous catalytic core and F(0) containing the membrane proton channel, linked together by a central stalk and a peripheral stalk. During catalysis, ATP synthesis in the catalytic domain of F(1) is coupled via a rotary mechanism of the central stalk subunits to proton translocation. Its function is as follows. Component of the F(0) channel, it forms part of the peripheral stalk, linking F(1) to F(0). The chain is ATP synthase subunit b from Lactobacillus helveticus (strain DPC 4571).